A 956-amino-acid polypeptide reads, in one-letter code: Angiomotin-like protein 1 (956 aa).

The tract at residues Gln-197–Lys-246 is disordered. Ser-241 and Ser-269 each carry phosphoserine. The stretch at Arg-259–Leu-279 forms a coiled coil. Disordered stretches follow at residues Gly-274 to Ser-322, Pro-382 to Val-405, and Leu-411 to Leu-430. A compositionally biased stretch (gly residues) spans Ser-282 to Pro-294. The residue at position 295 (Ser-295) is a Phosphoserine. The span at Pro-382 to Ala-398 shows a compositional bias: polar residues. Coiled coils occupy residues Val-438 to Arg-639 and Ala-665 to Glu-694. At Ser-720 the chain carries Phosphoserine. Residues Ser-729 to Ile-762 are a coiled coil. The segment at Gln-773–Lys-823 is disordered. Phosphoserine is present on residues Ser-793, Ser-805, and Ser-828. Polar residues predominate over residues Gly-802–Leu-815. 2 disordered regions span residues Ala-841 to Asp-880 and Pro-894 to Pro-944. A compositionally biased stretch (low complexity) spans Ser-852–Ala-866. A Phosphoserine modification is found at Ser-900. Thr-902 is modified (phosphothreonine). Phosphoserine is present on Ser-906. Residues Glu-953–Ile-956 carry the PDZ-binding motif.

The protein belongs to the angiomotin family. In terms of processing, polyubiquitinated by NEDD4, leading to proteasomal degradation.

The protein resides in the cell junction. Its subcellular location is the tight junction. In terms of biological role, inhibits the Wnt/beta-catenin signaling pathway, probably by recruiting CTNNB1 to recycling endosomes and hence preventing its translocation to the nucleus. The polypeptide is Angiomotin-like protein 1 (AMOTL1) (Homo sapiens (Human)).